Reading from the N-terminus, the 104-residue chain is Protein RnfH (104 aa).

Residues 80-104 are disordered; the sequence is PLTADPKLNRKRRAKEKASAGKASN.

The protein belongs to the UPF0125 (RnfH) family.

The chain is Protein RnfH from Alcanivorax borkumensis (strain ATCC 700651 / DSM 11573 / NCIMB 13689 / SK2).